A 269-amino-acid polypeptide reads, in one-letter code: Shikimate dehydrogenase (NADP(+)) (269 aa).

Shikimate-binding positions include serine 14–serine 16 and threonine 61. Residue lysine 65 is the Proton acceptor of the active site. Glutamate 77 provides a ligand contact to NADP(+). Asparagine 86 and aspartate 102 together coordinate shikimate. NADP(+)-binding positions include glycine 126–alanine 130, asparagine 149–lysine 154, and methionine 213. Residue tyrosine 215 participates in shikimate binding. Residue glycine 238 participates in NADP(+) binding.

The protein belongs to the shikimate dehydrogenase family. In terms of assembly, homodimer.

It catalyses the reaction shikimate + NADP(+) = 3-dehydroshikimate + NADPH + H(+). It participates in metabolic intermediate biosynthesis; chorismate biosynthesis; chorismate from D-erythrose 4-phosphate and phosphoenolpyruvate: step 4/7. In terms of biological role, involved in the biosynthesis of the chorismate, which leads to the biosynthesis of aromatic amino acids. Catalyzes the reversible NADPH linked reduction of 3-dehydroshikimate (DHSA) to yield shikimate (SA). The polypeptide is Shikimate dehydrogenase (NADP(+)) (Actinobacillus succinogenes (strain ATCC 55618 / DSM 22257 / CCUG 43843 / 130Z)).